The chain runs to 555 residues: CCR4-NOT transcription complex subunit 6-like (555 aa).

The required for interaction with CNOT1, CNOT3 and CNOT7 stretch occupies residues 1–152; the sequence is MRLIGMPKEK…NLYQDPDGTR (152 aa). LRR repeat units lie at residues 57–78, 80–101, 103–125, and 126–148; these read HLTALHLNDNYLSRIPPDIAKL, NLVYLDLSSNKLRSLPAELGNM, SLRELLLNNNLLRVLPYELGRLF, and QLQTLGLKGNPLSQDILNLYQDP. A nuclease domain region spans residues 158 to 555; that stretch reads MLDNLAVHPE…VNGVHLPNRR (398 aa). A Mg(2+)-binding site is contributed by Glu-240. 4 residues coordinate substrate: Glu-240, Glu-276, His-360, and Pro-365. Asp-410 contacts Mg(2+). Asp-410 (proton donor/acceptor) is an active-site residue. Asn-412, Asn-479, and Phe-484 together coordinate substrate.

It belongs to the CCR4/nocturin family. Component of the CCR4-NOT complex; distinct complexes seem to exist that differ in the participation of probably mutually exclusive catalytic subunits; the complex contains two deadenylase subunits, CNOT6 or CNOT6L, and CNOT7 or CNOT8. Interacts with CNOT1, CNOT3, CNOT7, CNOT8 and CNOT9. Interacts with TOB1. Interacts with NANOS2. Interacts with ZFP36. Interacts with ZFP36L2. Interacts with RBM46. The cofactor is Mg(2+). Highly expressed in placenta, skeletal muscle, pancreas, testis and leukocytes. Weakly expressed in heart, spleen and thymus.

The protein resides in the cytoplasm. It is found in the nucleus. The enzyme catalyses Exonucleolytic cleavage of poly(A) to 5'-AMP.. Its activity is regulated as follows. Inhibited by free AMP, and with lesser efficiency also by CMP, GMP, UMP, ATP and neomycin. Functionally, has 3'-5' poly(A) exoribonuclease activity for synthetic poly(A) RNA substrate. Catalytic component of the CCR4-NOT complex which is one of the major cellular mRNA deadenylases and is linked to various cellular processes including bulk mRNA degradation, miRNA-mediated repression, translational repression during translational initiation and general transcription regulation. Additional complex functions may be a consequence of its influence on mRNA expression. May be involved in the deadenylation-dependent degradation of mRNAs through the 3'-UTR AU-rich element-mediated mechanism. Involved in deadenylation-dependent degradation of CDKN1B mRNA. Its mRNA deadenylase activity can be inhibited by TOB1. Mediates cell proliferation and cell survival and prevents cellular senescence. This is CCR4-NOT transcription complex subunit 6-like (CNOT6L) from Homo sapiens (Human).